Consider the following 742-residue polypeptide: uncharacterized protein (742 aa).

A disordered region spans residues 167-471 (GIVPPEPWGH…AAGAAGGGGA (305 aa)). The segment covering 205-218 (PAPPPSLFAPPPPS) has biased composition (pro residues). Polar residues-rich tracts occupy residues 318–331 (SPAT…NAVS) and 358–368 (GSPQTLSTAPS). Residues 386–401 (TAGPAAPPTTGGPPAP) are compositionally biased toward pro residues. Low complexity predominate over residues 421–432 (PLSGGVPGGAVP). Pro residues predominate over residues 433–447 (LGPPPTPPPAAPVTT). Positions 448-464 (PPLASGAPVAPTGAAAG) are enriched in low complexity.

In terms of biological role, may be involved in the ESX-1 / type VII specialized secretion system (T7SS), which exports several proteins including EsxA and EsxB. Involved in DNA conjugation in the recipient strain. This is an uncharacterized protein from Mycolicibacterium smegmatis (strain MKD8) (Mycobacterium smegmatis).